A 215-amino-acid chain; its full sequence is 3-dehydroquinate dehydratase (215 aa).

Residues 30–32 (EVR) and arginine 62 each bind 3-dehydroquinate. Histidine 114 acts as the Proton donor/acceptor in catalysis. The active-site Schiff-base intermediate with substrate is lysine 140. Positions 178 and 201 each coordinate 3-dehydroquinate.

Belongs to the type-I 3-dehydroquinase family. As to quaternary structure, homodimer.

It carries out the reaction 3-dehydroquinate = 3-dehydroshikimate + H2O. The protein operates within metabolic intermediate biosynthesis; chorismate biosynthesis; chorismate from D-erythrose 4-phosphate and phosphoenolpyruvate: step 3/7. Involved in the third step of the chorismate pathway, which leads to the biosynthesis of aromatic amino acids. Catalyzes the cis-dehydration of 3-dehydroquinate (DHQ) and introduces the first double bond of the aromatic ring to yield 3-dehydroshikimate. The protein is 3-dehydroquinate dehydratase of Methanopyrus kandleri (strain AV19 / DSM 6324 / JCM 9639 / NBRC 100938).